We begin with the raw amino-acid sequence, 478 residues long: Proline--tRNA ligase (478 aa).

Belongs to the class-II aminoacyl-tRNA synthetase family. ProS type 3 subfamily. Homodimer.

It localises to the cytoplasm. It catalyses the reaction tRNA(Pro) + L-proline + ATP = L-prolyl-tRNA(Pro) + AMP + diphosphate. Functionally, catalyzes the attachment of proline to tRNA(Pro) in a two-step reaction: proline is first activated by ATP to form Pro-AMP and then transferred to the acceptor end of tRNA(Pro). The polypeptide is Proline--tRNA ligase (Clostridium botulinum (strain Langeland / NCTC 10281 / Type F)).